A 490-amino-acid chain; its full sequence is MVSAAAGWAAPAFAVAAVVIWVVLCSELLRRRRRGAGSGKGDAAAAARLPPGSFGWPVVGETLEFVSCAYSPRPEAFVDKRRKLHGSAVFRSHLFGSATVVTADAEVSRFVLQSDARAFVPWYPRSLTELMGKSSILLINGALQRRVHGLVGAFFKSSHLKSQLTADMRRRLSPALSSFPDSSLLHVQHLAKSVVFEILVRGLIGLEAGEEMQQLKQQFQEFIVGLMSLPIKLPGTRLYRSLQAKKKMARLIQRIIREKRARRAAASPPRDAIDVLIGDGSDELTDELISDNMIDLMIPAEDSVPVLITLAVKFLSECPLALHQLEEENIQLKRRKTDMGETLQWTDYMSLSFTQHVITETLRLGNIIGGIMRKAVRDVEVKGHLIPKGWCVFVYFRSVHLDDTLYDEPYKFNPWRWKEKDMSNGSFTPFGGGQRLCPGLDLARLEASIFLHHLVTSFRWVAEEDHIVNFPTVRLKRGMPIRVTAKEDDD.

Residues 4 to 24 (AAAGWAAPAFAVAAVVIWVVL) traverse the membrane as a helical segment. Cys-437 serves as a coordination point for heme.

It belongs to the cytochrome P450 family. The cofactor is heme. As to expression, expressed at low levels leaf blades, shoot apex and elongating stem.

It localises to the membrane. The enzyme catalyses 6-deoxoteasterone + reduced [NADPH--hemoprotein reductase] + O2 = 3-dehydro-6-deoxoteasterone + oxidized [NADPH--hemoprotein reductase] + 2 H2O + H(+). It participates in plant hormone biosynthesis; brassinosteroid biosynthesis. Functionally, catalyzes the C6-oxidation step in brassinosteroids biosynthesis. May convert 6-deoxoteasterone (6-deoxoTE) to 3-dehydro-6-deoxoteasterone (6-deoxo3DT, 6-deoxo3DHT), and teasterone (TE) to 3-dehydroteasterone (3DT, 3-DHT). Involved in the elongation of leaf sheaths and stems. In Oryza sativa subsp. japonica (Rice), this protein is Cytochrome P450 90D2.